Reading from the N-terminus, the 68-residue chain is Large ribosomal subunit protein bL35 (68 aa).

Belongs to the bacterial ribosomal protein bL35 family.

This is Large ribosomal subunit protein bL35 from Onion yellows phytoplasma (strain OY-M).